A 211-amino-acid chain; its full sequence is RNA chaperone ProQ (211 aa).

A disordered region spans residues Glu112–Ser148. Residues Ala124–Gly134 show a composition bias toward basic residues.

The protein belongs to the ProQ family.

Its subcellular location is the cytoplasm. Functionally, RNA chaperone with significant RNA binding, RNA strand exchange and RNA duplexing activities. The chain is RNA chaperone ProQ from Histophilus somni (strain 2336) (Haemophilus somnus).